The chain runs to 320 residues: Probable protein adenylyltransferase aq_aa38 (320 aa).

One can recognise a Fido domain in the interval 76-206 (VSEALILWIY…AIVVVEKLSR (131 aa)). ATP contacts are provided by residues 100–101 (KS), 157–159 (GNG), and Arg163.

The protein belongs to the fic family.

It catalyses the reaction L-tyrosyl-[protein] + ATP = O-(5'-adenylyl)-L-tyrosyl-[protein] + diphosphate. The catalysed reaction is L-threonyl-[protein] + ATP = 3-O-(5'-adenylyl)-L-threonyl-[protein] + diphosphate. Probable adenylyltransferase that mediates the addition of adenosine 5'-monophosphate (AMP) to specific residues of target proteins. In Aquifex aeolicus (strain VF5), this protein is Probable protein adenylyltransferase aq_aa38.